The following is a 1462-amino-acid chain: MGARNSVLRGKKADELEKVRLRPGGKKKYKLKHIVWAANELDRFGLAESLLESKEGCQRILKVLDPLVPTGSENLKSLFNTVCVIWCIHAEEKVKDTEEAKRIALRHLAAETGTAEKMPDTSRPTAPPSGKGGNYPVQSIGGNYTHVPLSPRTLNAWVKLVEEKKFGAEVVPGFQALSEGCTPYDINQMLNCVGDHQAAMQIIREIINEEAADWDANHPIPGPLPAGQLRDPRGSDIAGTTSTVEEQIQWMFRAQNPVPVGNIYRRWIQIGLQKCVRMYNPTNILDIKQGPKESFQSYVDRFYKSLRAEQTDPAVKNWMTQTLLVQNANPDCKLVLKGLGMNPTLEEMLTACQGVGGPGQKARLMAEALKEAMGPPPIPFAAAQQRRTIKCWNCGKEGHSARQCRAPRRQGCWKCGKPGHIMTNCPDRQAGFLRDWPLGKEAPQFPRGPSSTGANTNSTPIGSSSGSTGEIYAAREKAEGAETETIQRGDRGLTAPRTRRGPMQGDNRGLAAPQFSLWKRPVVTAHIEGQPVEVLLDTGADDSIVAGIELGSNYSPKIVGGIGGFINTKEYKNVEIEVLGKRVRATIMTGDTPINIFGRNILTALGMSLNLPVAKIEPIKIMLKPGKDGPRLRQWPLTKEKIEALKEICEKMEKEGQLEEAPPTNPYNTPTFAIRKKDKNKWRMLIDFRELNKVTQDFTEIQLGIPHPAGLAKKRRITVLDVGDAYFSIPLHEDFRQYTAFTLPSVNNAEPGKRYIYKVLPQGWKGSPAIFQYTMRQVLEPFRKANSDVIIIQYMDDILIASDRTDLEHDKVVLQLKELLNNLGFSTPDEKFQKDPPYRWMGYELWPTKWKLQKIQLPQKEVWTVNDIQKLVGVLNWAAQIYPGIKTKHLCRLIRGKMTLTEEVQWTELAEAELEENRIILSQEQEGHYYQEEKELEATVQKDQDNQWTYKIHQEEKILKVGKYAKIKHTHTNGVKLLAQVVQKIGKEALVIGRIPKFHLPVEREVWEQWWDNYWQVTWIPDWDFVSTPPLVRLAFNLVGDPIPGTETFYTDGSCNRQSKEGKAGYVTDRGRDKVKILEQTTNQQAELEAFAMALTDSGPKANIIVDSQYVMGIVAGQPTESENRIVNQIIEEMIKKEAIYVAWVPAHKGIGGNQEVDHLVSQGIRQVLFLEKIEPAQEEHEKYHTNVKELCHKFDIPQLVARQIVNTCAQYQQKGEAIHGQVNAEVGTWQMDCTHLEGKIIIVAVHVASGFIEAEVIPQESGRQTALFLLKLASRWPITHLHTDNGANFTSQEVKMVAWWVGIEQTFGVPYNPQSQGVVEAMNHHLKNQISRIREQANTVETIVLMAVHCMNFKRRGGIGDMTPSERLINMITTEQEIQFLQAKNSKLKNFRVYFREGRDQLWKGPGELLWKGDGAVIVKVGTDIKIIPRRKAKIIRDYGGRQELDSSSHLEGARENGEVA.

The N-myristoyl glycine; by host moiety is linked to residue Gly2. The tract at residues 7 to 31 (VLRGKKADELEKVRLRPGGKKKYKL) is interaction with Gp41. The Nuclear export signal motif lies at 16–22 (LEKVRLR). Positions 26 to 32 (KKKYKLK) match the Nuclear localization signal motif. Residues 111-136 (ETGTAEKMPDTSRPTAPPSGKGGNYP) form a disordered region. Tyr135 is modified (phosphotyrosine; by host). Positions 191–228 (NCVGDHQAAMQIIREIINEEAADWDANHPIPGPLPAGQ) are interaction with human PPIA/CYPA and NUP153. Residues 279 to 365 (YNPTNILDIK…GGPGQKARLM (87 aa)) form a dimerization/Multimerization of capsid protein p24 region. 2 consecutive CCHC-type zinc fingers follow at residues 389–406 (IKCW…QCRA) and 410–427 (QGCW…NCPD). The tract at residues 439-510 (GKEAPQFPRG…GPMQGDNRGL (72 aa)) is disordered. A compositionally biased stretch (low complexity) spans 456 to 469 (TNSTPIGSSSGSTG). Residues 473–491 (AAREKAEGAETETIQRGDR) are compositionally biased toward basic and acidic residues. The dimerization of protease stretch occupies residues 513–517 (PQFSL). One can recognise a Peptidase A2 domain in the interval 532–601 (VEVLLDTGAD…TPINIFGRNI (70 aa)). Residue Asp537 is the For protease activity; shared with dimeric partner of the active site. Dimerization of protease regions lie at residues 561-567 (GIGGFIN) and 600-612 (NILT…LNLP). One can recognise a Reverse transcriptase domain in the interval 655–845 (EGQLEEAPPT…PPYRWMGYEL (191 aa)). Asp721, Asp796, and Asp797 together coordinate Mg(2+). The interval 838 to 846 (YRWMGYELW) is RT 'primer grip'. The Tryptophan repeat motif signature appears at 1007–1023 (WEQWWDNYWQVTWIPDW). The RNase H type-1 domain occupies 1043–1166 (IPGTETFYTD…VDHLVSQGIR (124 aa)). Mg(2+) is bound by residues Asp1052, Glu1087, Asp1107, and Asp1158. The Integrase-type; degenerate zinc finger occupies 1172-1213 (EKIEPAQEEHEKYHTNVKELCHKFDIPQLVARQIVNTCAQYQ). The region spanning 1222-1373 (QVNAEVGTWQ…TPSERLINMI (152 aa)) is the Integrase catalytic domain. Mg(2+) contacts are provided by Asp1233, Asp1285, and Glu1321. Residues 1392–1439 (FRVYFREGRDQLWKGPGELLWKGDGAVIVKVGTDIKIIPRRKAKIIRD) constitute a DNA-binding region (integrase-type).

Homotrimer; further assembles as hexamers of trimers. Interacts with gp41 (via C-terminus). Interacts with host CALM1; this interaction induces a conformational change in the Matrix protein, triggering exposure of the myristate group. Interacts with host AP3D1; this interaction allows the polyprotein trafficking to multivesicular bodies during virus assembly. Part of the pre-integration complex (PIC) which is composed of viral genome, matrix protein, Vpr and integrase. In terms of assembly, homodimer; the homodimer further multimerizes as homohexamers or homopentamers. Interacts with human PPIA/CYPA. Interacts with human NUP153. Interacts with host PDZD8; this interaction stabilizes the capsid. Interacts with monkey TRIM5; this interaction destabilizes the capsid. As to quaternary structure, homodimer, whose active site consists of two apposed aspartic acid residues. Heterodimer of p66 RT and p51 RT (RT p66/p51). Heterodimerization of RT is essential for DNA polymerase activity. The overall folding of the subdomains is similar in p66 RT and p51 RT but the spatial arrangements of the subdomains are dramatically different. In terms of assembly, homotetramer; may further associate as a homohexadecamer. Part of the pre-integration complex (PIC) which is composed of viral genome, matrix protein, Vpr and integrase. Interacts with human SMARCB1/INI1 and human PSIP1/LEDGF isoform 1. Interacts with human KPNA3; this interaction might play a role in nuclear import of the pre-integration complex. Interacts with human NUP153; this interaction might play a role in nuclear import of the pre-integration complex. Mg(2+) is required as a cofactor. Specific enzymatic cleavages by the viral protease yield mature proteins. The protease is released by autocatalytic cleavage. The polyprotein is cleaved during and after budding, this process is termed maturation. Proteolytic cleavage of p66 RT removes the RNase H domain to yield the p51 RT subunit. Nucleocapsid protein p7 might be further cleaved after virus entry.

The protein resides in the host cell membrane. Its subcellular location is the host endosome. The protein localises to the host multivesicular body. It is found in the virion membrane. It localises to the host nucleus. The protein resides in the host cytoplasm. Its subcellular location is the virion. It carries out the reaction Endopeptidase for which the P1 residue is preferably hydrophobic.. It catalyses the reaction Endohydrolysis of RNA in RNA/DNA hybrids. Three different cleavage modes: 1. sequence-specific internal cleavage of RNA. Human immunodeficiency virus type 1 and Moloney murine leukemia virus enzymes prefer to cleave the RNA strand one nucleotide away from the RNA-DNA junction. 2. RNA 5'-end directed cleavage 13-19 nucleotides from the RNA end. 3. DNA 3'-end directed cleavage 15-20 nucleotides away from the primer terminus.. The catalysed reaction is 3'-end directed exonucleolytic cleavage of viral RNA-DNA hybrid.. The enzyme catalyses DNA(n) + a 2'-deoxyribonucleoside 5'-triphosphate = DNA(n+1) + diphosphate. Its activity is regulated as follows. Protease: The viral protease is inhibited by many synthetic protease inhibitors (PIs), such as amprenavir, atazanavir, indinavir, loprinavir, nelfinavir, ritonavir and saquinavir. Use of protease inhibitors in tritherapy regimens permit more ambitious therapeutic strategies. Reverse transcriptase/ribonuclease H: RT can be inhibited either by nucleoside RT inhibitors (NRTIs) or by non nucleoside RT inhibitors (NNRTIs). NRTIs act as chain terminators, whereas NNRTIs inhibit DNA polymerization by binding a small hydrophobic pocket near the RT active site and inducing an allosteric change in this region. Classical NRTIs are abacavir, adefovir (PMEA), didanosine (ddI), lamivudine (3TC), stavudine (d4T), tenofovir (PMPA), zalcitabine (ddC), and zidovudine (AZT). Classical NNRTIs are atevirdine (BHAP U-87201E), delavirdine, efavirenz (DMP-266), emivirine (I-EBU), and nevirapine (BI-RG-587). The tritherapies used as a basic effective treatment of AIDS associate two NRTIs and one NNRTI. Functionally, mediates, with Gag polyprotein, the essential events in virion assembly, including binding the plasma membrane, making the protein-protein interactions necessary to create spherical particles, recruiting the viral Env proteins, and packaging the genomic RNA via direct interactions with the RNA packaging sequence (Psi). Gag-Pol polyprotein may regulate its own translation, by the binding genomic RNA in the 5'-UTR. At low concentration, the polyprotein would promote translation, whereas at high concentration, the polyprotein would encapsidate genomic RNA and then shut off translation. Its function is as follows. Targets the polyprotein to the plasma membrane via a multipartite membrane-binding signal, that includes its myristoylated N-terminus. Matrix protein is part of the pre-integration complex. Implicated in the release from host cell mediated by Vpu. Binds to RNA. In terms of biological role, forms the conical core that encapsulates the genomic RNA-nucleocapsid complex in the virion. Most core are conical, with only 7% tubular. The core is constituted by capsid protein hexamer subunits. The core is disassembled soon after virion entry. Host restriction factors such as TRIM5-alpha or TRIMCyp bind retroviral capsids and cause premature capsid disassembly, leading to blocks in reverse transcription. Capsid restriction by TRIM5 is one of the factors which restricts HIV-1 to the human species. Host PIN1 apparently facilitates the virion uncoating. On the other hand, interactions with PDZD8 or CYPA stabilize the capsid. Encapsulates and protects viral dimeric unspliced genomic RNA (gRNA). Binds these RNAs through its zinc fingers. Acts as a nucleic acid chaperone which is involved in rearangement of nucleic acid secondary structure during gRNA retrotranscription. Also facilitates template switch leading to recombination. As part of the polyprotein, participates in gRNA dimerization, packaging, tRNA incorporation and virion assembly. Functionally, aspartyl protease that mediates proteolytic cleavages of Gag and Gag-Pol polyproteins during or shortly after the release of the virion from the plasma membrane. Cleavages take place as an ordered, step-wise cascade to yield mature proteins. This process is called maturation. Displays maximal activity during the budding process just prior to particle release from the cell. Also cleaves Nef and Vif, probably concomitantly with viral structural proteins on maturation of virus particles. Hydrolyzes host EIF4GI and PABP1 in order to shut off the capped cellular mRNA translation. The resulting inhibition of cellular protein synthesis serves to ensure maximal viral gene expression and to evade host immune response. Its function is as follows. Multifunctional enzyme that converts the viral RNA genome into dsDNA in the cytoplasm, shortly after virus entry into the cell. This enzyme displays a DNA polymerase activity that can copy either DNA or RNA templates, and a ribonuclease H (RNase H) activity that cleaves the RNA strand of RNA-DNA heteroduplexes in a partially processive 3' to 5' endonucleasic mode. Conversion of viral genomic RNA into dsDNA requires many steps. A tRNA(3)-Lys binds to the primer-binding site (PBS) situated at the 5'-end of the viral RNA. RT uses the 3' end of the tRNA primer to perform a short round of RNA-dependent minus-strand DNA synthesis. The reading proceeds through the U5 region and ends after the repeated (R) region which is present at both ends of viral RNA. The portion of the RNA-DNA heteroduplex is digested by the RNase H, resulting in a ssDNA product attached to the tRNA primer. This ssDNA/tRNA hybridizes with the identical R region situated at the 3' end of viral RNA. This template exchange, known as minus-strand DNA strong stop transfer, can be either intra- or intermolecular. RT uses the 3' end of this newly synthesized short ssDNA to perform the RNA-dependent minus-strand DNA synthesis of the whole template. RNase H digests the RNA template except for two polypurine tracts (PPTs) situated at the 5'-end and near the center of the genome. It is not clear if both polymerase and RNase H activities are simultaneous. RNase H probably can proceed both in a polymerase-dependent (RNA cut into small fragments by the same RT performing DNA synthesis) and a polymerase-independent mode (cleavage of remaining RNA fragments by free RTs). Secondly, RT performs DNA-directed plus-strand DNA synthesis using the PPTs that have not been removed by RNase H as primers. PPTs and tRNA primers are then removed by RNase H. The 3' and 5' ssDNA PBS regions hybridize to form a circular dsDNA intermediate. Strand displacement synthesis by RT to the PBS and PPT ends produces a blunt ended, linear dsDNA copy of the viral genome that includes long terminal repeats (LTRs) at both ends. In terms of biological role, catalyzes viral DNA integration into the host chromosome, by performing a series of DNA cutting and joining reactions. This enzyme activity takes place after virion entry into a cell and reverse transcription of the RNA genome in dsDNA. The first step in the integration process is 3' processing. This step requires a complex comprising the viral genome, matrix protein, Vpr and integrase. This complex is called the pre-integration complex (PIC). The integrase protein removes 2 nucleotides from each 3' end of the viral DNA, leaving recessed CA OH's at the 3' ends. In the second step, the PIC enters cell nucleus. This process is mediated through integrase and Vpr proteins, and allows the virus to infect a non dividing cell. This ability to enter the nucleus is specific of lentiviruses, other retroviruses cannot and rely on cell division to access cell chromosomes. In the third step, termed strand transfer, the integrase protein joins the previously processed 3' ends to the 5' ends of strands of target cellular DNA at the site of integration. The 5'-ends are produced by integrase-catalyzed staggered cuts, 5 bp apart. A Y-shaped, gapped, recombination intermediate results, with the 5'-ends of the viral DNA strands and the 3' ends of target DNA strands remaining unjoined, flanking a gap of 5 bp. The last step is viral DNA integration into host chromosome. This involves host DNA repair synthesis in which the 5 bp gaps between the unjoined strands are filled in and then ligated. Since this process occurs at both cuts flanking the HIV genome, a 5 bp duplication of host DNA is produced at the ends of HIV-1 integration. Alternatively, Integrase may catalyze the excision of viral DNA just after strand transfer, this is termed disintegration. This chain is Gag-Pol polyprotein (gag-pol), found in Homo sapiens (Human).